We begin with the raw amino-acid sequence, 68 residues long: Large ribosomal subunit protein bL32 (68 aa).

The tract at residues 1–20 (MAVPQNRVTRSRRNMRRSHD) is disordered.

This sequence belongs to the bacterial ribosomal protein bL32 family.

The chain is Large ribosomal subunit protein bL32 from Cereibacter sphaeroides (strain ATCC 17029 / ATH 2.4.9) (Rhodobacter sphaeroides).